Here is a 228-residue protein sequence, read N- to C-terminus: MKEPFTNASYFPPVETALVDPNGLLAIGGDLSQERLLDAYRHGIFPWFNPREPIQWWSPDPRMVLPPAEIRVTRSLAKRLRNAGFELRVDSAFIEVMRACGAPREGAWGTWISAPMIAAYGRLFDAGYAHSIETWRDGRLVGGLYGVAIGRMFYGESMFSREPDASKVALVRLARQLERWGFGLIDCQMETPHLASMGARPIPRADFTARLAELVNLPHLPGPWTFDS.

This sequence belongs to the L/F-transferase family.

It is found in the cytoplasm. It catalyses the reaction N-terminal L-lysyl-[protein] + L-leucyl-tRNA(Leu) = N-terminal L-leucyl-L-lysyl-[protein] + tRNA(Leu) + H(+). The catalysed reaction is N-terminal L-arginyl-[protein] + L-leucyl-tRNA(Leu) = N-terminal L-leucyl-L-arginyl-[protein] + tRNA(Leu) + H(+). It carries out the reaction L-phenylalanyl-tRNA(Phe) + an N-terminal L-alpha-aminoacyl-[protein] = an N-terminal L-phenylalanyl-L-alpha-aminoacyl-[protein] + tRNA(Phe). Functions in the N-end rule pathway of protein degradation where it conjugates Leu, Phe and, less efficiently, Met from aminoacyl-tRNAs to the N-termini of proteins containing an N-terminal arginine or lysine. In Thiobacillus denitrificans (strain ATCC 25259 / T1), this protein is Leucyl/phenylalanyl-tRNA--protein transferase.